Consider the following 229-residue polypeptide: Matrix protein (229 aa).

The dynamin binding signature appears at 2 to 4 (KSI). Residues 11 to 36 (AKKEKKREKKSNHGSHSMEWESPPSY) are disordered. Over residues 13-23 (KEKKREKKSNH) the composition is skewed to basic residues. A PPXY motif motif is present at residues 33 to 36 (PPSY). The PTAP/PSAP motif signature appears at 42–45 (PSAP).

Belongs to the vesiculoviruses matrix protein family. Homomultimer. Interacts with viral nucleocapsid; this interaction contributes to the virion assembly. Interacts with the viral envelope glycoprotein; this interaction contributes to the virion assembly. Interacts with host RAE1-NUP98 complex. Interacts with host NEDD4 and TSG101. Interacts with host dynamin. Interacts with host NDUFAF4; the interaction inhibits viral propagation and is independent of interferon activation. Interacts with host GTF2H5; the interaction may inhibit host transcription. Phosphorylated by host.

The protein localises to the virion. Its subcellular location is the host endomembrane system. The protein resides in the host nucleus membrane. It localises to the host nucleus. It is found in the host cytoplasm. In terms of biological role, forms a double layer around the helical nucleocapsid, the inner matrix layer binding to the N helix and the outer matrix layer binding to the envelope glycoprotein. Plays a major role in assembly and budding of virion, by recruiting cellular partners of the ESCRT complexes that play a key role in releasing the budding particle from the host membrane. Condensates the ribonucleocapsid core during virus assembly. Inhibits the host mRNA nuclear export thereby inducing the shut off of cellular transcription and preventing the interferon signaling and the establishment of antiviral state in infected cells. This shutoff presumably inhibits interferon signaling and thus establishment of antiviral state in virus infected cells. Induces cell-rounding, cytoskeleton disorganization and apoptosis in infected cell. Inhibits host transcription, possibly through interaction with host DNA repair factor IIH/TFIIH GTF2H5 subunit. The polypeptide is Matrix protein (M) (Piry virus (PIRYV)).